The chain runs to 325 residues: DNA-directed RNA polymerase subunit alpha (325 aa).

An alpha N-terminal domain (alpha-NTD) region spans residues 1–231; that stretch reads MQTSLLKPKI…DQLSVFAALE (231 aa). Residues 246 to 325 are alpha C-terminal domain (alpha-CTD); the sequence is IDPILLRPVD…ENWPPAGLDK (80 aa).

Belongs to the RNA polymerase alpha chain family. Homodimer. The RNAP catalytic core consists of 2 alpha, 1 beta, 1 beta' and 1 omega subunit. When a sigma factor is associated with the core the holoenzyme is formed, which can initiate transcription.

The enzyme catalyses RNA(n) + a ribonucleoside 5'-triphosphate = RNA(n+1) + diphosphate. Functionally, DNA-dependent RNA polymerase catalyzes the transcription of DNA into RNA using the four ribonucleoside triphosphates as substrates. This Burkholderia multivorans (strain ATCC 17616 / 249) protein is DNA-directed RNA polymerase subunit alpha.